Reading from the N-terminus, the 360-residue chain is Histidinol-phosphate aminotransferase (360 aa).

An N6-(pyridoxal phosphate)lysine modification is found at lysine 211.

It belongs to the class-II pyridoxal-phosphate-dependent aminotransferase family. Histidinol-phosphate aminotransferase subfamily. Homodimer. Requires pyridoxal 5'-phosphate as cofactor.

It carries out the reaction L-histidinol phosphate + 2-oxoglutarate = 3-(imidazol-4-yl)-2-oxopropyl phosphate + L-glutamate. It functions in the pathway amino-acid biosynthesis; L-histidine biosynthesis; L-histidine from 5-phospho-alpha-D-ribose 1-diphosphate: step 7/9. The polypeptide is Histidinol-phosphate aminotransferase (Sodalis glossinidius (strain morsitans)).